The chain runs to 405 residues: Corticosteroid-binding globulin (405 aa).

The signal sequence occupies residues 1–22; that stretch reads MPLLLYTCLLWLSTSGLWTVQA. N-linked (GlcNAc...) asparagine glycosylation is found at Asn-26, Asn-31, Asn-96, and Asn-260. Residue Asn-286 participates in cortisol binding. N-linked (GlcNAc...) asparagine glycosylation is found at Asn-330 and Asn-369. Residue Trp-393 participates in cortisol binding.

This sequence belongs to the serpin family. Expressed by the liver; secreted in plasma.

It is found in the secreted. Major transport protein for glucocorticoids and progestins in the blood of almost all vertebrate species. In Pongo abelii (Sumatran orangutan), this protein is Corticosteroid-binding globulin (SERPINA6).